The following is a 538-amino-acid chain: Cytochrome P450 monooxygenase claO (538 aa).

A run of 2 helical transmembrane segments spans residues 7–27 (IGAFNILVFLIFLWLLSKLVG) and 222–242 (INPSYFSMVIFLLALVFPILL). Cysteine 475 is a heme binding site.

This sequence belongs to the cytochrome P450 family. Requires heme as cofactor.

The protein localises to the membrane. It participates in secondary metabolite biosynthesis; terpenoid biosynthesis. Its function is as follows. Cytochrome P450 monooxygenase; part of the gene cluster that mediates the biosynthesis of clavilactone A, a meroterpenoid that features a unique benzo-fused ten-membered carbocyclic ring unit with an alpha,beta-epoxy-gamma-lactone moiety, forming an intriguing 10/5/3 tricyclic nested skeleton. Cytochrome P450 monooxygenases claO, claP, claQ, claU, and claW are close orthologs, suggesting that a redundant function or pseudogenes are present in the cla cluster. These monoxygenases are not involved in clavilactone A biosynthesis nor in its modification. ClaR, ClaS and ClaT are sufficient to produce clavilactone A. The biosynthesis begins with the prenyltransferase claS that transfers geranyl pyrophosphate (GPP) to hydroquinone to produces geranylhydroquinone. The cytochrome P450 monooxygenase claR then catalyzes the diradical coupling reaction between the intramolecular hydroquinone and allyl moieties to form the benzo-fused ten-membered carbocyclic ring unit of wigantol. Finally the cytochrome P450 monooxygenase claT exquisitely and stereoselectively assembles the alpha,beta-epoxy-gamma-lactone moiety, producing clavilactone A via arnebinol A. In Ampulloclitocybe clavipes (Club foot), this protein is Cytochrome P450 monooxygenase claO.